The chain runs to 579 residues: Probable N-acetylgalactosaminyltransferase 9 (579 aa).

Residues methionine 1 to threonine 12 are Cytoplasmic-facing. The helical; Signal-anchor for type II membrane protein transmembrane segment at phenylalanine 13–histidine 30 threads the bilayer. The Lumenal segment spans residues arginine 31–alanine 579. Asparagine 67 carries an N-linked (GlcNAc...) asparagine glycan. 5 disulfide bridges follow: cysteine 123–cysteine 356, cysteine 347–cysteine 427, cysteine 464–cysteine 483, cysteine 507–cysteine 520, and cysteine 545–cysteine 562. The segment at leucine 133–arginine 243 is catalytic subdomain A. Substrate-binding residues include aspartate 174 and arginine 204. Aspartate 227 provides a ligand contact to Mn(2+). A substrate-binding site is contributed by serine 228. Histidine 229 lines the Mn(2+) pocket. Residues tyrosine 302 to arginine 364 form a catalytic subdomain B region. Residue tryptophan 333 participates in substrate binding. Histidine 361 provides a ligand contact to Mn(2+). Positions 364, 367, and 369 each coordinate substrate. N-linked (GlcNAc...) asparagine glycosylation occurs at asparagine 370. The Ricin B-type lectin domain maps to alanine 450–isoleucine 574.

It belongs to the glycosyltransferase 2 family. GalNAc-T subfamily. Mn(2+) serves as cofactor.

Its subcellular location is the golgi apparatus membrane. It functions in the pathway protein modification; protein glycosylation. Functionally, probable glycopeptide transferase involved in O-linked oligosaccharide biosynthesis. Glycopeptide transferases catalyze the transfer of an N-acetyl-D-galactosamine residue to an already glycosylated peptide. In contrast to other members of the family, it does not act as a peptide transferase that transfers GalNAc onto serine or threonine residue on peptides that have been tested. Some peptide transferase activity is however not excluded, considering that its appropriate peptide substrate may remain unidentified. This chain is Probable N-acetylgalactosaminyltransferase 9 (gly-9), found in Caenorhabditis elegans.